The following is a 591-amino-acid chain: MIVLPNKVRIFINDRMKKDIYLGISNFGFENDIDEILGIAHLLEHLLISFDSTNFLANASTSRSYMSFWCKSINSATESDAIRTLVSWFFSNGKLKDNFSLSSIRFHIKELENEYYFRNEVFHCMDILTFLSGGDLYNGGRIDMIDNLNIVRDMLVNRMQRISGSNIVIFVKRLGPGTLDFFKQTFGSLPACPEIIPSSIPVSTNGKIVMTPSPFYTVMVKINPTLDNILGILYLYETYHLIDYETIGNQLYLTVSFIDETEYESFLRGEAILQISQCQRINMNYSDDYMMNIYLNFPWLSHDLYDYITRINDDSKSILISLTNEIYASIINRDIIVIYPNFSKAMCNTRDTQQHPIVVLDATNDGLIKKPYRSIPLMKRLTSNEIFIRYGDASLMDMITLSLSKQDISLKRNAEGIRVKHSFSADDIQAIMESDSFLKYSRSKPAAMYQYIFLSFFASGNSIDDILANRDSTLEFSKRTKSKILFGRNTRYDVTAKSSFVCGIVRGKSLDKTSLVEMMWDLKKKGLIYSMEFTNLLSKNTFYLFTFTIYTDEVYDYLNTNKLFSAKCLVVSTKGDVENFSSLKKDVVIRV.

Residue His41 coordinates Zn(2+). Residue Glu44 is part of the active site. Residue His45 participates in Zn(2+) binding.

The protein belongs to the peptidase M44 family. It depends on Zn(2+) as a cofactor. Post-translationally, undergoes proteolytic processing during the course of infection. May be cleaved into 46 kDa and 22 kDa products (Potential).

Its subcellular location is the virion. Probably involved in maturation of some viral proteins by processing them preferentially at Ala-Gly-|-Ser/Thr/Lys motifs. Does not seem to be responsible for the cleavage of major core proteins. This is Metalloendopeptidase OPG085 (OPG085) from Homo sapiens (Human).